We begin with the raw amino-acid sequence, 341 residues long: MSSSTTVFVSGASGFIAQTLVKQLIEKGYKVVGTVRSNEKGDSLKENLKAAKLQSENFTYEIVKDIAVKGAFDDALKKHPEVTVFLHTASPFHFNVTDIEKELLTPAVEGTNNALQAIKTHGPQIKRVVVTSSYAAVGRFADLADPSIPATEESWNPITWEQSLSNPLAGYVGSKKFAEKAAWDFVEKEKPNFTLSVINPVYVFGPQAFEIKNKSQLNTSSEIINGLLNSKPDSKFDNLTGYFIDVRDVAKAHIVAFEKDSIQGQRLILAESPFSTQSILDLIRKDFPQLDSQLPKGDPSQADAWKKAESKIENEKTRELLGFKFIDFKKSIDDSVAQIIG.

Positions 40 and 171 each coordinate NADP(+).

It belongs to the NAD(P)-dependent epimerase/dehydratase family. Dihydroflavonol-4-reductase subfamily.

The protein localises to the cytoplasm. It carries out the reaction (S)-lactaldehyde + NADP(+) = methylglyoxal + NADPH + H(+). Its function is as follows. Catalyzes the irreversible reduction of the cytotoxic compound methylglyoxal (MG, 2-oxopropanal) to (S)-lactaldehyde. MG is synthesized via a bypath of glycolysis from dihydroxyacetone phosphate and is believed to play a role in cell cycle regulation and stress adaptation. The sequence is that of Putative NADPH-dependent methylglyoxal reductase GRP2 (GRP2) from Candida albicans (strain SC5314 / ATCC MYA-2876) (Yeast).